Reading from the N-terminus, the 284-residue chain is RNase adapter protein RapZ (284 aa).

Residue 8 to 15 coordinates ATP; sequence GRSGSGKS. 56 to 59 provides a ligand contact to GTP; it reads DVRN. The segment at 266 to 284 is RNA-binding; that stretch reads RSRGKNVQSRHRTLEKRKT.

It belongs to the RapZ-like family. RapZ subfamily. In terms of assembly, homotrimer.

Functionally, modulates the synthesis of GlmS, by affecting the processing and stability of the regulatory small RNA GlmZ. When glucosamine-6-phosphate (GlcN6P) concentrations are high in the cell, RapZ binds GlmZ and targets it to cleavage by RNase E. Consequently, GlmZ is inactivated and unable to activate GlmS synthesis. Under low GlcN6P concentrations, RapZ is sequestered and inactivated by an other regulatory small RNA, GlmY, preventing GlmZ degradation and leading to synthesis of GlmS. In Salmonella typhimurium (strain LT2 / SGSC1412 / ATCC 700720), this protein is RNase adapter protein RapZ.